The chain runs to 430 residues: MGKNVVVLGTQWGDEGKGKIVDLLTEHAAAVVRYQGGHNAGHTLVINGEKTVLHLIPSGILREGVQCLIGNGVVVAPDALMREITKLEEKGVPVRERLRISPAAPLILSYHVALDQAREKARGEAKIGTTGRGIGPAYEDKVARRGLRVGDLFHRERFAAKLGELLDYHNFQLVNYYKEPAIDFQQTLDECMAYAEQLKPMMLDVTAELHNLRRAGKDIMFEGAQGSLLDIDHGTYPYVTSSNTTAGGISTGSGVGPMYLDYILGITKAYTTRVGSGPFPTELFDETGATLAKRGHEFGSTTGRARRCGWFDAVILRRAIDVNSISGICLTKLDVLDGLETINICVGYKNENGAVIDAPSDADSYIGLEPVYEQMPGWSESTLGVKTLEELPEAARAYIKRIEELVGAPIDIISTGPDRNETIVLRHPFA.

Residues 13 to 19 (GDEGKGK) and 41 to 43 (GHT) each bind GTP. Residue Asp14 is the Proton acceptor of the active site. Mg(2+) is bound by residues Asp14 and Gly41. IMP is bound by residues 14-17 (DEGK), 39-42 (NAGH), Thr130, Arg144, Gln225, Thr240, and Arg304. The active-site Proton donor is His42. 300–306 (STTGRAR) contributes to the substrate binding site. GTP-binding positions include Arg306, 332 to 334 (KLD), and 414 to 416 (STG).

Belongs to the adenylosuccinate synthetase family. Homodimer. Mg(2+) serves as cofactor.

It localises to the cytoplasm. It catalyses the reaction IMP + L-aspartate + GTP = N(6)-(1,2-dicarboxyethyl)-AMP + GDP + phosphate + 2 H(+). The protein operates within purine metabolism; AMP biosynthesis via de novo pathway; AMP from IMP: step 1/2. In terms of biological role, plays an important role in the de novo pathway of purine nucleotide biosynthesis. Catalyzes the first committed step in the biosynthesis of AMP from IMP. The chain is Adenylosuccinate synthetase from Pseudomonas entomophila (strain L48).